A 139-amino-acid chain; its full sequence is Large ribosomal subunit protein uL16 (139 aa).

A compositionally biased stretch (basic residues) spans 1–16; that stretch reads MLIPRRVKHRKQHHPG. Positions 1-25 are disordered; it reads MLIPRRVKHRKQHHPGRSGQATGGT.

Belongs to the universal ribosomal protein uL16 family. Part of the 50S ribosomal subunit.

Functionally, binds 23S rRNA and is also seen to make contacts with the A and possibly P site tRNAs. This is Large ribosomal subunit protein uL16 from Leifsonia xyli subsp. xyli (strain CTCB07).